A 63-amino-acid polypeptide reads, in one-letter code: ATP synthase F(0) complex subunit 8 (63 aa).

Residues 8–24 (MWLLTILSMLLTLFVLF) form a helical membrane-spanning segment. Lys-57 is modified (N6-acetyllysine).

The protein belongs to the ATPase protein 8 family. In terms of assembly, component of the ATP synthase complex composed at least of ATP5F1A/subunit alpha, ATP5F1B/subunit beta, ATP5MC1/subunit c (homooctomer), MT-ATP6/subunit a, MT-ATP8/subunit 8, ATP5ME/subunit e, ATP5MF/subunit f, ATP5MG/subunit g, ATP5MK/subunit k, ATP5MJ/subunit j, ATP5F1C/subunit gamma, ATP5F1D/subunit delta, ATP5F1E/subunit epsilon, ATP5PF/subunit F6, ATP5PB/subunit b, ATP5PD/subunit d, ATP5PO/subunit OSCP. ATP synthase complex consists of a soluble F(1) head domain (subunits alpha(3) and beta(3)) - the catalytic core - and a membrane F(0) domain - the membrane proton channel (subunits c, a, 8, e, f, g, k and j). These two domains are linked by a central stalk (subunits gamma, delta, and epsilon) rotating inside the F1 region and a stationary peripheral stalk (subunits F6, b, d, and OSCP). Interacts with PRICKLE3.

It is found in the mitochondrion membrane. In terms of biological role, subunit 8, of the mitochondrial membrane ATP synthase complex (F(1)F(0) ATP synthase or Complex V) that produces ATP from ADP in the presence of a proton gradient across the membrane which is generated by electron transport complexes of the respiratory chain. ATP synthase complex consist of a soluble F(1) head domain - the catalytic core - and a membrane F(1) domain - the membrane proton channel. These two domains are linked by a central stalk rotating inside the F(1) region and a stationary peripheral stalk. During catalysis, ATP synthesis in the catalytic domain of F(1) is coupled via a rotary mechanism of the central stalk subunits to proton translocation. In vivo, can only synthesize ATP although its ATP hydrolase activity can be activated artificially in vitro. Part of the complex F(0) domain. The polypeptide is ATP synthase F(0) complex subunit 8 (Balaenoptera physalus (Fin whale)).